We begin with the raw amino-acid sequence, 1165 residues long: uncharacterized protein (1165 aa).

Residues 422-442 form a disordered region; that stretch reads EAAPPRPPRKSKAPEPTGDKA.

This is an uncharacterized protein from Frog virus 3 (isolate Goorha) (FV-3).